Consider the following 68-residue polypeptide: Large ribosomal subunit protein uL29 (68 aa).

This sequence belongs to the universal ribosomal protein uL29 family.

The polypeptide is Large ribosomal subunit protein uL29 (Parvibaculum lavamentivorans (strain DS-1 / DSM 13023 / NCIMB 13966)).